Reading from the N-terminus, the 218-residue chain is Ribulose-phosphate 3-epimerase (218 aa).

A substrate-binding site is contributed by serine 10. A divalent metal cation-binding residues include histidine 35, aspartate 37, and histidine 68. The active-site Proton acceptor is the aspartate 37. Residues histidine 68, glycine 144–glycine 147, aspartate 177–glycine 179, and glycine 199–serine 200 contribute to the substrate site. Aspartate 177 contributes to the a divalent metal cation binding site. The Proton donor role is filled by aspartate 177.

Belongs to the ribulose-phosphate 3-epimerase family. A divalent metal cation is required as a cofactor.

It catalyses the reaction D-ribulose 5-phosphate = D-xylulose 5-phosphate. It functions in the pathway carbohydrate degradation. Catalyzes the reversible epimerization of D-ribulose 5-phosphate to D-xylulose 5-phosphate. The protein is Ribulose-phosphate 3-epimerase of Treponema pallidum (strain Nichols).